Here is a 654-residue protein sequence, read N- to C-terminus: Acetyl-coenzyme A synthetase (654 aa).

Residues 190–193 and Thr313 each bind CoA; that span reads RGGK. ATP is bound by residues 389–391, 413–418, Asp504, and Arg519; these read GEP and DTWWQT. Position 527 (Ser527) interacts with CoA. Position 530 (Arg530) interacts with ATP. 3 residues coordinate Mg(2+): Val541, His543, and Val546. Lys613 is modified (N6-acetyllysine).

It belongs to the ATP-dependent AMP-binding enzyme family. The cofactor is Mg(2+). Acetylated. Deacetylation by the SIR2-homolog deacetylase activates the enzyme.

The catalysed reaction is acetate + ATP + CoA = acetyl-CoA + AMP + diphosphate. In terms of biological role, catalyzes the conversion of acetate into acetyl-CoA (AcCoA), an essential intermediate at the junction of anabolic and catabolic pathways. AcsA undergoes a two-step reaction. In the first half reaction, AcsA combines acetate with ATP to form acetyl-adenylate (AcAMP) intermediate. In the second half reaction, it can then transfer the acetyl group from AcAMP to the sulfhydryl group of CoA, forming the product AcCoA. The protein is Acetyl-coenzyme A synthetase of Leptospira biflexa serovar Patoc (strain Patoc 1 / Ames).